We begin with the raw amino-acid sequence, 245 residues long: tRNA pseudouridine synthase A (245 aa).

Catalysis depends on Asp52, which acts as the Nucleophile. Position 111 (Tyr111) interacts with substrate.

Belongs to the tRNA pseudouridine synthase TruA family. Homodimer.

The enzyme catalyses uridine(38/39/40) in tRNA = pseudouridine(38/39/40) in tRNA. Formation of pseudouridine at positions 38, 39 and 40 in the anticodon stem and loop of transfer RNAs. The polypeptide is tRNA pseudouridine synthase A (Rickettsia typhi (strain ATCC VR-144 / Wilmington)).